The sequence spans 397 residues: NADH-quinone oxidoreductase subunit H (397 aa).

The next 9 helical transmembrane spans lie at 7–27, 78–98, 120–140, 164–184, 195–215, 247–267, 283–303, 322–342, and 353–373; these read ALLI…TAFA, LVYT…FGGI, ILAL…GGWA, MGLS…LDIV, WLIL…FAEV, MAEY…FFGG, SWPL…FIWV, LTLP…AFVP, and WLLG…SDAV.

This sequence belongs to the complex I subunit 1 family. As to quaternary structure, NDH-1 is composed of 15 different subunits. Subunits NuoA, H, J, K, L, M, N constitute the membrane sector of the complex.

The protein resides in the cell membrane. It catalyses the reaction a quinone + NADH + 5 H(+)(in) = a quinol + NAD(+) + 4 H(+)(out). Its function is as follows. NDH-1 shuttles electrons from NADH, via FMN and iron-sulfur (Fe-S) centers, to quinones in the respiratory chain. The immediate electron acceptor for the enzyme in this species is believed to be ubiquinone. Couples the redox reaction to proton translocation (for every two electrons transferred, four hydrogen ions are translocated across the cytoplasmic membrane), and thus conserves the redox energy in a proton gradient. This subunit may bind ubiquinone. In Deinococcus radiodurans (strain ATCC 13939 / DSM 20539 / JCM 16871 / CCUG 27074 / LMG 4051 / NBRC 15346 / NCIMB 9279 / VKM B-1422 / R1), this protein is NADH-quinone oxidoreductase subunit H.